The following is a 221-amino-acid chain: Lipoprotein-releasing system ATP-binding protein LolD (221 aa).

Positions 6–220 constitute an ABC transporter domain; that stretch reads LILKNISKHY…YKLKHGLLNI (215 aa). Residue 42 to 49 coordinates ATP; sequence GSSGSGKS.

It belongs to the ABC transporter superfamily. Lipoprotein translocase (TC 3.A.1.125) family. In terms of assembly, the complex is composed of two ATP-binding proteins (LolD) and two transmembrane proteins (LolC and LolE).

The protein resides in the cell inner membrane. Functionally, part of the ABC transporter complex LolCDE involved in the translocation of mature outer membrane-directed lipoproteins, from the inner membrane to the periplasmic chaperone, LolA. Responsible for the formation of the LolA-lipoprotein complex in an ATP-dependent manner. The sequence is that of Lipoprotein-releasing system ATP-binding protein LolD from Rickettsia felis (strain ATCC VR-1525 / URRWXCal2) (Rickettsia azadi).